We begin with the raw amino-acid sequence, 356 residues long: tRNA-specific 2-thiouridylase MnmA 1 (356 aa).

Residues 8-15 and Met-34 contribute to the ATP site; that span reads GMSGGVDS. The Nucleophile role is filled by Cys-103. Cys-103 and Cys-199 form a disulfide bridge. Gly-127 is a binding site for ATP. Residues 149–151 are interaction with tRNA; that stretch reads KDQ. Residue Cys-199 is the Cysteine persulfide intermediate of the active site. Residues 305–306 form an interaction with tRNA region; it reads RY.

This sequence belongs to the MnmA/TRMU family.

It is found in the cytoplasm. It catalyses the reaction S-sulfanyl-L-cysteinyl-[protein] + uridine(34) in tRNA + AH2 + ATP = 2-thiouridine(34) in tRNA + L-cysteinyl-[protein] + A + AMP + diphosphate + H(+). Functionally, catalyzes the 2-thiolation of uridine at the wobble position (U34) of tRNA, leading to the formation of s(2)U34. The polypeptide is tRNA-specific 2-thiouridylase MnmA 1 (Clostridium botulinum (strain Langeland / NCTC 10281 / Type F)).